Reading from the N-terminus, the 95-residue chain is Putative defensin-like protein 252 (95 aa).

An N-terminal signal peptide occupies residues 1–27 (MRCVTSFVVLCILMFLVVNNVKVDVKA). 4 disulfide bridges follow: Cys34-Cys93, Cys45-Cys72, Cys56-Cys85, and Cys70-Cys87.

This sequence belongs to the DEFL family.

It is found in the secreted. This chain is Putative defensin-like protein 252 (SCRL13), found in Arabidopsis thaliana (Mouse-ear cress).